Consider the following 335-residue polypeptide: Partner of xrn-2 protein 1 (335 aa).

The 85-residue stretch at 7–91 folds into the XRN2-binding (XTBD) domain; the sequence is VEAEKKLWES…SYVKASAAKK (85 aa). The interval 95–119 is disordered; that stretch reads VKTSDLEGASDESKKVKMEKSPSPV. The span at 105-114 shows a compositional bias: basic and acidic residues; it reads DESKKVKMEK.

In terms of assembly, interacts (via N-terminus) with xrn-2; the interaction is direct.

Its subcellular location is the nucleus. The protein resides in the nucleolus. It localises to the nucleoplasm. Its function is as follows. Plays a role in maintenance of steady-state concentration and turnover of microRNAs (miRNA) by degradation of mature miRNA in complex with the exoribonuclease xrn-2. Stabilizes and enhances the accumulation and activity of the exoribonuclease xrn-2, and thus contributes to miRNA turnover. The polypeptide is Partner of xrn-2 protein 1 (Caenorhabditis elegans).